The following is a 254-amino-acid chain: Probable transcriptional regulatory protein Cyan7425_4347 (254 aa).

It belongs to the TACO1 family.

It is found in the cytoplasm. This Cyanothece sp. (strain PCC 7425 / ATCC 29141) protein is Probable transcriptional regulatory protein Cyan7425_4347.